The following is a 362-amino-acid chain: Vignain (362 aa).

Positions methionine 1–alanine 20 are cleaved as a signal peptide. Residues asparagine 21–glycine 126 constitute a propeptide, activation peptide. 3 disulfide bridges follow: cysteine 149/cysteine 191, cysteine 183/cysteine 224, and cysteine 282/cysteine 334. Residue cysteine 152 is part of the active site. Residues histidine 288 and asparagine 309 contribute to the active site. Asparagine 326 and asparagine 346 each carry an N-linked (GlcNAc...) asparagine glycan. Positions glycine 353 to leucine 362 are cleaved as a propeptide — removed in mature form. The short motif at lysine 359–leucine 362 is the Prevents secretion from ER element.

Belongs to the peptidase C1 family. Post-translationally, the mature protein is not glycosylated. In terms of processing, the precursor stored in the endoplasmic reticulum lumen is processed during the transport to proteins bodies to two dominant mature forms that differ by a single amino acid residue at the N-terminus.

The protein localises to the endoplasmic reticulum lumen. It localises to the vacuole. The protein resides in the aleurone grain. Functionally, thought to be involved in the hydrolysis of stored seed proteins. In vitro, catalyzes the hydrolysis of proteins, such as azocasein. Shows a preferential cleavage for Asn-|-Xaa in small molecule substrates such as Boc-Asn-|-OPHNO(2). This is Vignain from Vigna mungo (Black gram).